The following is a 1353-amino-acid chain: Protein timeless homolog (1353 aa).

Disordered regions lie at residues 798 to 825 (VAED…EEEV), 1150 to 1291 (KPTR…LEED), and 1306 to 1335 (GGSI…DPFT). Residues 802–825 (RAEDPDEEDPAEPYDSEQEEEEEV) show a composition bias toward acidic residues. Composition is skewed to basic and acidic residues over residues 1150–1160 (KPTRQVERHLE) and 1168–1182 (ERSK…KFDD). Composition is skewed to acidic residues over residues 1183–1206 (FLND…EEEE) and 1217–1226 (DSEDEEEHIE). Basic and acidic residues predominate over residues 1227-1239 (QEEAQKKLEKVAE). 3 stretches are compositionally biased toward acidic residues: residues 1261-1273 (DSSD…DSAE), 1282-1291 (AEDDSDLEED), and 1323-1332 (EEREDDDDED).

The protein belongs to the timeless family. Associates with the cohesin complex. Interacts with smc-1, smc-3, scc-1 and scc-3.

The protein localises to the nucleus. Its function is as follows. Plays an important role in chromosome cohesion during both mitosis and meiosis. In prophase of meiosis, it is involved in the formation of the synaptonemal complex (SC) and specifically, in the diplotene and diakinesis phases of prophase, it stabilizes the association of homologous chromosomes during synapsis and sister chromatid cohesion. It regulates cohesin subunits to promote meiotic chromosome cohesion and localizes non-SMC (structural maintenance of chromosome) cohesin subunits to chromatin prior to or during pre-meiotic S phase. Implicated in influencing either the stability or loading of meiotic-specific cohesin subunit, rec8. Controls cell cycle exit and cell fusion to prevent the premature differentiation into adult cells. Specifically, regulates hypodermal seam cell identity. This chain is Protein timeless homolog, found in Caenorhabditis elegans.